The primary structure comprises 336 residues: Nuclear envelope-associated protein 3 (336 aa).

Coiled-coil stretches lie at residues 14 to 87 (LKDL…IRAS) and 128 to 261 (VLSK…LKKK). The short motif at 240-261 (KTKELEDQVENQRRIDQELKKK) is the Bipartite nuclear localization signal element. Residues 313-330 (LWDKSGFKIVVSMSMLIL) traverse the membrane as a helical segment.

In terms of assembly, forms homomers and heteromers with NEAP1 and NEAP2. Interacts with SUN1 and SUN2.

It is found in the nucleus inner membrane. The protein localises to the nucleus. The protein resides in the nucleoplasm. This chain is Nuclear envelope-associated protein 3, found in Arabidopsis thaliana (Mouse-ear cress).